The following is a 349-amino-acid chain: ATPase GET3 (349 aa).

Residue 26-33 (KGGVGKTT) coordinates ATP. The active site involves aspartate 57. Glutamate 240 and asparagine 267 together coordinate ATP. Residues cysteine 280 and cysteine 283 each coordinate Zn(2+).

The protein belongs to the arsA ATPase family. In terms of assembly, homodimer. Component of the Golgi to ER traffic (GET) complex, which is composed of GET1, GET2 and GET3. Within the complex, GET1 and GET2 form a heterotetramer which is stabilized by phosphatidylinositol binding and which binds to the GET3 homodimer. Interacts with the chloride channel protein GEF1.

Its subcellular location is the cytoplasm. The protein resides in the endoplasmic reticulum. It localises to the golgi apparatus. Functionally, ATPase required for the post-translational delivery of tail-anchored (TA) proteins to the endoplasmic reticulum. Recognizes and selectively binds the transmembrane domain of TA proteins in the cytosol. This complex then targets to the endoplasmic reticulum by membrane-bound receptors GET1 and GET2, where the tail-anchored protein is released for insertion. This process is regulated by ATP binding and hydrolysis. ATP binding drives the homodimer towards the closed dimer state, facilitating recognition of newly synthesized TA membrane proteins. ATP hydrolysis is required for insertion. Subsequently, the homodimer reverts towards the open dimer state, lowering its affinity for the GET1-GET2 receptor, and returning it to the cytosol to initiate a new round of targeting. Cooperates with the HDEL receptor ERD2 to mediate the ATP-dependent retrieval of resident ER proteins that contain a C-terminal H-D-E-L retention signal from the Golgi to the ER. Involved in low-level resistance to the oxyanions arsenite and arsenate, and in heat tolerance. The sequence is that of ATPase GET3 from Lachancea thermotolerans (strain ATCC 56472 / CBS 6340 / NRRL Y-8284) (Yeast).